We begin with the raw amino-acid sequence, 243 residues long: Small ribosomal subunit protein uS3 (243 aa).

The KH type-2 domain maps to Leu-22–Ala-93. Positions Gln-195–Ala-243 are disordered.

Belongs to the universal ribosomal protein uS3 family.

This chain is Small ribosomal subunit protein uS3 (RpS3), found in Manduca sexta (Tobacco hawkmoth).